Reading from the N-terminus, the 955-residue chain is 2-oxoglutarate dehydrogenase E1 component (955 aa).

This sequence belongs to the alpha-ketoglutarate dehydrogenase family. Homodimer. Part of the 2-oxoglutarate dehydrogenase (OGDH) complex composed of E1 (2-oxoglutarate dehydrogenase), E2 (dihydrolipoamide succinyltransferase) and E3 (dihydrolipoamide dehydrogenase); the complex contains multiple copies of the three enzymatic components (E1, E2 and E3). Thiamine diphosphate serves as cofactor.

It catalyses the reaction N(6)-[(R)-lipoyl]-L-lysyl-[protein] + 2-oxoglutarate + H(+) = N(6)-[(R)-S(8)-succinyldihydrolipoyl]-L-lysyl-[protein] + CO2. Its function is as follows. E1 component of the 2-oxoglutarate dehydrogenase (OGDH) complex which catalyzes the decarboxylation of 2-oxoglutarate, the first step in the conversion of 2-oxoglutarate to succinyl-CoA and CO(2). The sequence is that of 2-oxoglutarate dehydrogenase E1 component from Bacillus cereus (strain ATCC 10987 / NRS 248).